The sequence spans 624 residues: Polycystin-2-like protein 2 (624 aa).

The Cytoplasmic portion of the chain corresponds to 1–31 (MAEASRWHRGGASKHKLHYRKEVEITTTLQE). Residues 32-52 (LLLYFIFLINLCILTFGMVNP) traverse the membrane as a helical segment. At 53–276 (HMYYLNKVMS…YSVKLLRYVS (224 aa)) the chain is on the extracellular side. Asn115 and Asn138 each carry an N-linked (GlcNAc...) asparagine glycan. The chain crosses the membrane as a helical span at residues 277–297 (YYDYFIASCEITFCIFLFVFT). Over 298 to 314 (TQEVKKIKEFKSAYFKS) the chain is Cytoplasmic. Residues 315-335 (IWNWLELLLLLLCFVAVSFNT) form a helical membrane-spanning segment. Residues 336-360 (YYNVQIFLLLGQLLKSTEKYSDFYF) are Extracellular-facing. Residues 361–381 (LACWHIYYNNIIAITIFFAWI) form a helical membrane-spanning segment. The Cytoplasmic portion of the chain corresponds to 382–406 (KIFKFISFNKTMSQLSSTLSRCVKD). Residues 407–427 (IVGFAIMFFIIFFAYAQLGFL) traverse the membrane as a helical segment. Topologically, residues 428–469 (VFGSQVDDFSTFQNSIFAQFRIVLGDFNFAGIQQANPILGPI) are extracellular. Residues 470 to 490 (YFITFIFFVFFVLLNMFLAII) traverse the membrane as a helical segment. Topologically, residues 491–624 (NDTYSEVKAD…NQVVRKVSAL (134 aa)) are cytoplasmic. A coiled-coil region spans residues 556–576 (ENEIQNAEQMKKWKERLEKKY).

Belongs to the polycystin family. Interacts with TRPC1 and TRPC5. Expressed only in testis. Expressed also in brain and kidney. As to expression, expressed only in transformed lymphoblasts.

It is found in the membrane. Functionally, exhibits a lower single conductance but no spontaneous channel activity. May function as a regulator of calcium channels or a channel component involving Ca2(+) homeostasis. This chain is Polycystin-2-like protein 2, found in Homo sapiens (Human).